Here is a 418-residue protein sequence, read N- to C-terminus: Cell division protein FtsA (418 aa).

This sequence belongs to the FtsA/MreB family. Self-interacts. Interacts with FtsZ.

The protein resides in the cell inner membrane. Functionally, cell division protein that is involved in the assembly of the Z ring. May serve as a membrane anchor for the Z ring. This chain is Cell division protein FtsA, found in Buchnera aphidicola subsp. Acyrthosiphon pisum (strain APS) (Acyrthosiphon pisum symbiotic bacterium).